The sequence spans 299 residues: ATP phosphoribosyltransferase (299 aa).

This sequence belongs to the ATP phosphoribosyltransferase family. Long subfamily. Equilibrium between an active dimeric form, an inactive hexameric form and higher aggregates. Interconversion between the various forms is largely reversible and is influenced by the natural substrates and inhibitors of the enzyme. Requires Mg(2+) as cofactor.

The protein localises to the cytoplasm. The catalysed reaction is 1-(5-phospho-beta-D-ribosyl)-ATP + diphosphate = 5-phospho-alpha-D-ribose 1-diphosphate + ATP. The protein operates within amino-acid biosynthesis; L-histidine biosynthesis; L-histidine from 5-phospho-alpha-D-ribose 1-diphosphate: step 1/9. With respect to regulation, feedback inhibited by histidine. Catalyzes the condensation of ATP and 5-phosphoribose 1-diphosphate to form N'-(5'-phosphoribosyl)-ATP (PR-ATP). Has a crucial role in the pathway because the rate of histidine biosynthesis seems to be controlled primarily by regulation of HisG enzymatic activity. The protein is ATP phosphoribosyltransferase of Salmonella enteritidis PT4 (strain P125109).